The chain runs to 404 residues: Cysteine desulfurase IscS (404 aa).

Pyridoxal 5'-phosphate-binding positions include 75 to 76 (AT), N155, Q183, and 203 to 205 (SGH). K206 is modified (N6-(pyridoxal phosphate)lysine). T243 is a binding site for pyridoxal 5'-phosphate. The active-site Cysteine persulfide intermediate is the C328. C328 serves as a coordination point for [2Fe-2S] cluster.

It belongs to the class-V pyridoxal-phosphate-dependent aminotransferase family. NifS/IscS subfamily. In terms of assembly, homodimer. Forms a heterotetramer with IscU, interacts with other sulfur acceptors. It depends on pyridoxal 5'-phosphate as a cofactor.

The protein resides in the cytoplasm. It catalyses the reaction (sulfur carrier)-H + L-cysteine = (sulfur carrier)-SH + L-alanine. The protein operates within cofactor biosynthesis; iron-sulfur cluster biosynthesis. Master enzyme that delivers sulfur to a number of partners involved in Fe-S cluster assembly, tRNA modification or cofactor biosynthesis. Catalyzes the removal of elemental sulfur and selenium atoms from cysteine and selenocysteine to produce alanine. Functions as a sulfur delivery protein for Fe-S cluster synthesis onto IscU, an Fe-S scaffold assembly protein, as well as other S acceptor proteins. Also functions as a selenium delivery protein in the pathway for the biosynthesis of selenophosphate. This chain is Cysteine desulfurase IscS, found in Salmonella paratyphi C (strain RKS4594).